A 415-amino-acid polypeptide reads, in one-letter code: MSHKSAEMYELKKKVEELKKIRGRATELVSLYIPADYDLNKVMQQLREEYGTAQNIKSKTTRKNVLGALERAMQHLKLYRQTPETGLALFVGNVSEQEGVSDIRVFAIVPPEPLNVRLYRCDQTFVTEPLEEMLRVKDAYGLITVEKNEATIGILRGKKIEVIEDLTSNVPGKTRAGGQSARRYERIREQEAHEFMKRIGEHASSVFLPLLEKDELKGIIIGGPGPTKEEFVEGEYLHHELRKRILGVVDISYHGEYGLRELVEKASDILREHEAVKERKLVQQFFKHLVKDTGLITYGEKEVRKALELGAVDILLLSEGYDRVRVKALCNNCGWEELKTMTEAEFELYKKNLKACPKCNSQNISVEKWDVAEELIKIAEEGGAEVEIISLDTEEGQQFYKAFGGIAAILRYKLQ.

It belongs to the eukaryotic release factor 1 family. In terms of assembly, heterodimer of two subunits, one of which binds GTP.

It localises to the cytoplasm. In terms of biological role, directs the termination of nascent peptide synthesis (translation) in response to the termination codons UAA, UAG and UGA. The sequence is that of Peptide chain release factor subunit 1 from Thermococcus sibiricus (strain DSM 12597 / MM 739).